A 388-amino-acid chain; its full sequence is S-adenosylmethionine synthase (388 aa).

Histidine 17 serves as a coordination point for ATP. Aspartate 19 contacts Mg(2+). Glutamate 45 is a binding site for K(+). Positions 58 and 102 each coordinate L-methionine. The segment at 102-112 (QSADIAQGVDA) is flexible loop. Residues 167-169 (DSK), 232-233 (RF), aspartate 241, 247-248 (RK), alanine 264, and lysine 268 each bind ATP. Residue aspartate 241 coordinates L-methionine. Lysine 272 is a binding site for L-methionine.

This sequence belongs to the AdoMet synthase family. Homotetramer; dimer of dimers. It depends on Mg(2+) as a cofactor. Requires K(+) as cofactor.

The protein localises to the cytoplasm. It catalyses the reaction L-methionine + ATP + H2O = S-adenosyl-L-methionine + phosphate + diphosphate. It participates in amino-acid biosynthesis; S-adenosyl-L-methionine biosynthesis; S-adenosyl-L-methionine from L-methionine: step 1/1. Its function is as follows. Catalyzes the formation of S-adenosylmethionine (AdoMet) from methionine and ATP. The overall synthetic reaction is composed of two sequential steps, AdoMet formation and the subsequent tripolyphosphate hydrolysis which occurs prior to release of AdoMet from the enzyme. This Paramagnetospirillum magneticum (strain ATCC 700264 / AMB-1) (Magnetospirillum magneticum) protein is S-adenosylmethionine synthase.